The primary structure comprises 594 residues: Aspartate--tRNA(Asp/Asn) ligase (594 aa).

Residue Glu175 coordinates L-aspartate. Residues Gln199–Lys202 form an aspartate region. Residues Arg221 and His455 each coordinate L-aspartate. Arg221–Glu223 contacts ATP. Glu489 serves as a coordination point for ATP. Arg496 is an L-aspartate binding site. An ATP-binding site is contributed by Gly541–Arg544.

This sequence belongs to the class-II aminoacyl-tRNA synthetase family. Type 1 subfamily. As to quaternary structure, homodimer.

It is found in the cytoplasm. The catalysed reaction is tRNA(Asx) + L-aspartate + ATP = L-aspartyl-tRNA(Asx) + AMP + diphosphate. In terms of biological role, aspartyl-tRNA synthetase with relaxed tRNA specificity since it is able to aspartylate not only its cognate tRNA(Asp) but also tRNA(Asn). Reaction proceeds in two steps: L-aspartate is first activated by ATP to form Asp-AMP and then transferred to the acceptor end of tRNA(Asp/Asn). The chain is Aspartate--tRNA(Asp/Asn) ligase from Pelagibacter ubique (strain HTCC1062).